Here is a 243-residue protein sequence, read N- to C-terminus: Zinc import ATP-binding protein ZnuC (243 aa).

Residues 4–219 form the ABC transporter domain; sequence IAAHHLAVRR…PEYRALFGHG (216 aa). Position 36 to 43 (36 to 43) interacts with ATP; sequence GPNGSGKS.

Belongs to the ABC transporter superfamily. Zinc importer (TC 3.A.1.15.5) family. As to quaternary structure, the complex is composed of two ATP-binding proteins (ZnuC), two transmembrane proteins (ZnuB) and a solute-binding protein (ZnuA).

The protein resides in the cell inner membrane. The catalysed reaction is Zn(2+)(out) + ATP(in) + H2O(in) = Zn(2+)(in) + ADP(in) + phosphate(in) + H(+)(in). Functionally, part of the ABC transporter complex ZnuABC involved in zinc import. Responsible for energy coupling to the transport system. In Cereibacter sphaeroides (strain ATCC 17023 / DSM 158 / JCM 6121 / CCUG 31486 / LMG 2827 / NBRC 12203 / NCIMB 8253 / ATH 2.4.1.) (Rhodobacter sphaeroides), this protein is Zinc import ATP-binding protein ZnuC.